Consider the following 787-residue polypeptide: MAPVGAALWRSLRAHQVYGANTDVGKTIVSTFLCNAVNRLKNQGKSAFLKPVSTGPLDEADDRHLQRHAPNTLTKCLYQFDEPVSPHIAAKTFAIPRDDEILSSVHRTLSDWANDGVGFALVETAGGVHSPGPNGNSQADLYRPLRLPIILVADSRLGGISSSISAYESLLLRGYDVHSVLLFKDDYYQNHEYLGNYFRGKSIPLVPVPAPPRRPQEQDPDSRARDLEALDKYYSSVTKSTDVVSLLDELVLKNKQRVEYLDEMASRAQKTIWYPFTQHHGMAAKDITPIDSAYDDFFQTYVTADRSAQQGRLQATFDGSASWWTQGLGHGNPGLALSAAYAAGRYGHVMFPGNIHEPALALAESLLKTVDNPRLQKVFYTDNGSTGMEVALKMGLRAACDRYGWDASKEQINILGLKGSYHGDTIGVMDCSEPSTYNQRVEWYRGRGHWFDFPLVKMSQGVWQVEVPATLQASLGGNQQFSSLDAVFDVESRVRSDAGQRYRKYILETIERLVTQEGKKFGALIMEPIILGAGGMLFCDPLFQRCLADVVRGNPQLFNRGRLTEPQPQTDLSWSGLPVIFDEVFTGLYRLGRKSSASFLGVNPDIAVNAKLLTGGLVPLCTTLASNEIFNAFTSPEKRDALLHGHSYTAHAVGCQVALDSLRTMNNMDEDGSWNDFKNDWKQPHAGDTARVWSVWSHKLLHNLSHAESVDGVFAIGSVLSISLKDAEGAGYTSTAAKGLQTRLAAGGPQFNVHSRVLGNVLYLMSSVTSKQETLRTIEGILREALL.

Residue 23 to 28 (DVGKTI) participates in ATP binding. T27 contributes to the Mg(2+) binding site. T54 contacts substrate. D61 and E123 together coordinate Mg(2+). Residues 123-126 (ETAG) and 184-185 (KD) contribute to the ATP site. 323–324 (WW) contacts (8S)-8-amino-7-oxononanoate. 384-385 (GS) contributes to the pyridoxal 5'-phosphate binding site. A (8S)-8-amino-7-oxononanoate-binding site is contributed by Y421. Position 582 (D582) interacts with pyridoxal 5'-phosphate. Residues K611 and G645 each contribute to the (8S)-8-amino-7-oxononanoate site. Position 646–647 (646–647 (HS)) interacts with pyridoxal 5'-phosphate. R756 contributes to the (8S)-8-amino-7-oxononanoate binding site.

This sequence in the N-terminal section; belongs to the dethiobiotin synthetase family. It in the C-terminal section; belongs to the class-III pyridoxal-phosphate-dependent aminotransferase family. BioA subfamily. Homodimer. It depends on Mg(2+) as a cofactor. Pyridoxal 5'-phosphate is required as a cofactor.

Its subcellular location is the mitochondrion matrix. The catalysed reaction is (7R,8S)-7,8-diammoniononanoate + CO2 + ATP = (4R,5S)-dethiobiotin + ADP + phosphate + 3 H(+). It catalyses the reaction (8S)-8-amino-7-oxononanoate + S-adenosyl-L-methionine = S-adenosyl-4-methylsulfanyl-2-oxobutanoate + (7R,8S)-7,8-diammoniononanoate. It participates in cofactor biosynthesis; biotin biosynthesis; biotin from 7,8-diaminononanoate: step 1/2. Its pathway is cofactor biosynthesis; biotin biosynthesis; 7,8-diaminononanoate from 8-amino-7-oxononanoate (SAM route): step 1/1. Its function is as follows. Bifunctional enzyme; part of the cluster involved in the biosynthesis of biotin (also known as vitamin B8 or vitamin H), a water-soluble vitamin that functions as a prosthetic group of many carboxylases, such as acetyl-CoA carboxylase and pyruvate carboxylase. Catalyzes a mechanistically unusual reaction, the ATP-dependent insertion of CO2 between the N7 and N8 nitrogen atoms of 7,8-diaminopelargonic acid (DAPA) to form an ureido ring. Also catalyzes the transfer of the alpha-amino group from S-adenosyl-L-methionine (SAM) to 7-keto-8-aminopelargonic acid (KAPA) to form 7,8-diaminopelargonic acid (DAPA). It is the only animotransferase known to utilize SAM as an amino donor. This Emericella nidulans (strain FGSC A4 / ATCC 38163 / CBS 112.46 / NRRL 194 / M139) (Aspergillus nidulans) protein is Bifunctional dethiobiotin synthetase/adenosylmethionine-8-amino-7-oxononanoate aminotransferase.